Consider the following 610-residue polypeptide: Peptidyl-prolyl cis-trans isomerase 9 (610 aa).

Position 13 is a phosphoserine (Ser-13). 3 WD repeats span residues 45–83 (MHNA…VEYI), 88–127 (AHNA…LVNI), and 177–216 (KHTA…QKPD). The PPIase cyclophilin-type domain maps to 453 to 607 (LGKAAIIHTT…EPTKIINISI (155 aa)).

This sequence belongs to the cyclophilin-type PPIase family.

Its subcellular location is the nucleus. The catalysed reaction is [protein]-peptidylproline (omega=180) = [protein]-peptidylproline (omega=0). PPIases accelerate the folding of proteins. It catalyzes the cis-trans isomerization of proline imidic peptide bonds in oligopeptides. This Schizosaccharomyces pombe (strain 972 / ATCC 24843) (Fission yeast) protein is Peptidyl-prolyl cis-trans isomerase 9 (cyp9).